The following is a 506-amino-acid chain: MSSGLSLERACAVALGIVASASLVAAGPCDIYSSGGTPCVAAHSTTRALYSAYTGALYQVKRGSDGSTTDIAPLSAGGVADAAIQDSFCANTTCLITIIYDQSGRGNHLTQAPPGGFNGPESNGYDNLASAVGAPVTLNGKKAYGVFMSPGTGYRNNAASGTATGDKAEGMYAVLDGTHYNSACCFDYGNAEVSNTDTGNGHMEAIYYGDNTVWGSGAGSGPWIMADLENGLFSGLSSTNNAGDPSISYRFVTAVVKGEANQWSIRGANAASGSLSTYYSGARPSASGYNPMSKEGAIILGIGGDNSNGAQGTFYEGVMTSGYPSDATENSVQADIVAAKYAIASLTSGPALTVGSSISLQVTTAGYTTRYLAHDGSTVNTQVVSSSSTTALRQQASWTVRTGLANSACLSFESVDTPGSYIRHYNFALLLNANDGTKQFYEDATFCPQAGLNGQGNSIRSWSYPTRYFRHYENVLYVASNGGVQTFDATTSFNDDVSWVVSTGFA.

An N-terminal signal peptide occupies residues 1–26; sequence MSSGLSLERACAVALGIVASASLVAA. A catalytic region spans residues 27 to 343; that stretch reads GPCDIYSSGG…ADIVAAKYAI (317 aa). 3 disulfide bridges follow: cysteine 29/cysteine 39, cysteine 89/cysteine 94, and cysteine 184/cysteine 185. An N-linked (GlcNAc...) asparagine glycan is attached at asparagine 91. A substrate-binding site is contributed by aspartate 227. Residue glutamate 229 is the Nucleophile of the active site. The substrate site is built by asparagine 230 and glycine 304. The active-site Proton donor is aspartate 305. Residues 344–506 form an ABD region; that stretch reads ASLTSGPALT…VSWVVSTGFA (163 aa). A disulfide bridge links cysteine 409 with cysteine 447. Substrate-binding residues include histidine 424, asparagine 426, phenylalanine 427, aspartate 443, histidine 471, glutamate 473, leucine 476, and aspartate 496.

This sequence belongs to the glycosyl hydrolase 54 family.

The protein resides in the secreted. It catalyses the reaction Hydrolysis of terminal non-reducing alpha-L-arabinofuranoside residues in alpha-L-arabinosides.. It participates in glycan metabolism; L-arabinan degradation. In terms of biological role, alpha-L-arabinofuranosidase involved in the degradation of arabinoxylan, a major component of plant hemicellulose. Able to hydrolyze 1,5-, 1,3- and 1,2-alpha-linkages not only in L-arabinofuranosyl oligosaccharides, but also in polysaccharides containing terminal non-reducing L-arabinofuranoses in side chains, like L-arabinan, arabinogalactan and arabinoxylan. The polypeptide is Alpha-L-arabinofuranosidase B (abfB) (Aspergillus oryzae (strain ATCC 42149 / RIB 40) (Yellow koji mold)).